The chain runs to 422 residues: Protein FAM53B (422 aa).

Phosphoserine is present on residues Ser118, Ser167, Ser169, Ser179, Ser212, and Ser268. Residues Ser245–Ser268 show a composition bias toward low complexity. The segment at Ser245–Gln269 is disordered. The Nuclear localization signal motif lies at Lys281–Arg284.

This sequence belongs to the FAM53 family. In terms of assembly, interacts with CTNNB1. As to expression, detected in skeletal muscle, kidney, spleen, thyroid, testis, ovary, small intestine, colon and peripheral blood.

It is found in the nucleus. Functionally, acts as a regulator of Wnt signaling pathway by regulating beta-catenin (CTNNB1) nuclear localization. The sequence is that of Protein FAM53B from Homo sapiens (Human).